Here is a 2135-residue protein sequence, read N- to C-terminus: Protein SUBSTANDARD STARCH GRAIN 4, chloroplastic (2135 aa).

Composition is skewed to low complexity over residues 1–10 (MSHCLRASPF) and 72–84 (QHQP…RQQQ). A chloroplast-targeting transit peptide spans 1–42 (MSHCLRASPFLSPPPPLLHPSRRRRHRQGGCIHTSPGTRPLV). Disordered regions lie at residues 1 to 44 (MSHC…LVAR) and 58 to 89 (SDSS…PPPP). The Stromal portion of the chain corresponds to 43–104 (ARARFDPPPL…ASLAPLWREG (62 aa)). A helical transmembrane segment spans residues 105–125 (LFLVRCSVFAAALSVAAALSW). Residues 126–2135 (YAQLRARSFV…LFEYSATSQG (2010 aa)) are Chloroplast intermembrane-facing. Over residues 361–370 (RRRYRRKAHS) the composition is skewed to basic residues. Disordered stretches follow at residues 361–382 (RRRY…SSQQ), 401–492 (SGNP…QVSE), and 1843–1869 (FLGS…SFKP). 3 stretches are compositionally biased toward polar residues: residues 373–382 (ISDTDNSSQQ), 454–490 (NFAS…NEQV), and 1846–1856 (SLSTSPDGQQS). Residues 1857 to 1866 (ETERTPEHGS) show a composition bias toward basic and acidic residues.

This sequence belongs to the TamB family. In terms of assembly, part of the TIC complex, which can interact with components of the TOC complex to form a larger import complex. As to expression, highly expressed in third leaf and developing seeds. Expressed in anthers, pistils, flag leaves and young panicles.

It localises to the plastid. The protein resides in the chloroplast inner membrane. It is found in the chloroplast intermembrane space. Its subcellular location is the chloroplast. The protein localises to the amyloplast. Functionally, part of the inner chloroplast membrane translocon complex (TIC) which associates with the outer chloroplast membrane translocon complex (TOC) and forms a supercomplex involved in protein precursor import into the chloroplast stroma. Required for the regulation of starch granule size in amyloplasts. This Oryza sativa subsp. japonica (Rice) protein is Protein SUBSTANDARD STARCH GRAIN 4, chloroplastic.